Reading from the N-terminus, the 355-residue chain is MSNNGIAAVVVDDSQFMRTVISDMLDDAGITVVATASNGESGVEAVRTHEPDVVTMDLKMPGMDGIEATGRIMDECPTPVLVLSAHADDGAELTFEAMDEGAVDFFKKPSGEVSVGIKQQQDELVEKVRSVAGADVSATEAAAERTTSTATSTTTSRSASEYVDKPTLVIGSSTGGPTVVEQLLSELPLDADLRILVVQHMPDGFTGRFAKRLDGASEYSVSEATGGERIGGGEALVAQGGYHLEVSGYGGGRLRVTLTEDEPVNNVRPAVDVTLQTAAEQVDGPLTAAILTGMGADGADGVESVSAAGGSVVAQDEETSAVFGMPQRAIETGVVDDVRPRNELADGVLDTIMRE.

The 117-residue stretch at 7–123 (AAVVVDDSQF…SVGIKQQQDE (117 aa)) folds into the Response regulatory domain. Position 57 is a 4-aspartylphosphate (Asp57). The disordered stretch occupies residues 139–159 (TEAAAERTTSTATSTTTSRSA). Residues 161 to 355 (EYVDKPTLVI…DGVLDTIMRE (195 aa)) form the CheB-type methylesterase domain. Residues Ser173, His200, and Asp297 contribute to the active site.

It belongs to the CheB family. Phosphorylated by CheA. Phosphorylation of the N-terminal regulatory domain activates the methylesterase activity.

The protein resides in the cytoplasm. The enzyme catalyses [protein]-L-glutamate 5-O-methyl ester + H2O = L-glutamyl-[protein] + methanol + H(+). It catalyses the reaction L-glutaminyl-[protein] + H2O = L-glutamyl-[protein] + NH4(+). Involved in chemotaxis. Part of a chemotaxis signal transduction system that modulates chemotaxis in response to various stimuli. Catalyzes the demethylation of specific methylglutamate residues introduced into the chemoreceptors (methyl-accepting chemotaxis proteins or MCP) by CheR. Also mediates the irreversible deamidation of specific glutamine residues to glutamic acid. This chain is Protein-glutamate methylesterase/protein-glutamine glutaminase, found in Natronomonas pharaonis (strain ATCC 35678 / DSM 2160 / CIP 103997 / JCM 8858 / NBRC 14720 / NCIMB 2260 / Gabara) (Halobacterium pharaonis).